Reading from the N-terminus, the 1138-residue chain is Condensin-2 complex subunit G2 (1138 aa).

Residue serine 30 is modified to Phosphoserine. The stretch at 459–497 is one HEAT repeat; the sequence is LLPTLRYSLHDNSEKVRVAFVDLLLKIKAVRAAKFWKIC. The residue at position 1114 (threonine 1114) is a Phosphothreonine.

In terms of assembly, component of the condensin-2 complex, which contains the SMC2 and SMC4 heterodimer, and 3 non SMC subunits that probably regulate the complex: NCAPH2, NCAPD3 and NCAPG2. In terms of tissue distribution, expressed in spleen, lung and testis as well as in hematopoietic cell lines.

The protein localises to the nucleus. Functionally, regulatory subunit of the condensin-2 complex, a complex which establishes mitotic chromosome architecture and is involved in physical rigidity of the chromatid axis. Is required for early embryonic development and is essential for viability and expansion of the inner cell mass (ICM) of the implanting blastocyst. The sequence is that of Condensin-2 complex subunit G2 (Ncapg2) from Mus musculus (Mouse).